Here is a 172-residue protein sequence, read N- to C-terminus: R-phycocyanin-2 beta chain (172 aa).

N72 carries the N4-methylasparagine modification. C82 serves as a coordination point for (2R,3E)-phycocyanobilin. Residue C153 coordinates (2R,3E)-phycoerythrobilin.

Belongs to the phycobiliprotein family. Heterodimer of an alpha and a beta chain. In terms of processing, contains two covalently linked bilin chromophores.

It is found in the cellular thylakoid membrane. Light-harvesting photosynthetic bile pigment-protein from the phycobiliprotein complex. The chain is R-phycocyanin-2 beta chain (rpcB) from Synechococcus sp. (strain WH8020).